We begin with the raw amino-acid sequence, 609 residues long: UvrABC system protein C (609 aa).

The 78-residue stretch at 15–92 folds into the GIY-YIG domain; it reads TGSGVYQMQD…IKQFRPRYNV (78 aa). One can recognise a UVR domain in the interval 202-237; sequence DQVIIKLTERMEVASENLVFEEAAHYRDQIRQLRRL.

This sequence belongs to the UvrC family. In terms of assembly, interacts with UvrB in an incision complex.

Its subcellular location is the cytoplasm. Its function is as follows. The UvrABC repair system catalyzes the recognition and processing of DNA lesions. UvrC both incises the 5' and 3' sides of the lesion. The N-terminal half is responsible for the 3' incision and the C-terminal half is responsible for the 5' incision. In Coxiella burnetii (strain RSA 331 / Henzerling II), this protein is UvrABC system protein C.